We begin with the raw amino-acid sequence, 221 residues long: tRNA (guanine-N(7)-)-methyltransferase (221 aa).

S-adenosyl-L-methionine contacts are provided by Glu-51, Glu-76, Asp-103, and Asp-125. Asp-125 is a catalytic residue. Lys-129 and Asp-161 together coordinate substrate.

Belongs to the class I-like SAM-binding methyltransferase superfamily. TrmB family.

The enzyme catalyses guanosine(46) in tRNA + S-adenosyl-L-methionine = N(7)-methylguanosine(46) in tRNA + S-adenosyl-L-homocysteine. It functions in the pathway tRNA modification; N(7)-methylguanine-tRNA biosynthesis. Functionally, catalyzes the formation of N(7)-methylguanine at position 46 (m7G46) in tRNA. The chain is tRNA (guanine-N(7)-)-methyltransferase from Wolbachia pipientis wMel.